Consider the following 258-residue polypeptide: Regulatory protein RecX (258 aa).

Belongs to the RecX family.

It localises to the cytoplasm. In terms of biological role, modulates RecA activity. The sequence is that of Regulatory protein RecX from Streptococcus pneumoniae (strain P1031).